The primary structure comprises 177 residues: O-acetyl-ADP-ribose deacetylase (177 aa).

The Macro domain maps to 1 to 175 (MKSRIHVQHG…LYERLLTQQG (175 aa)). Residues 11–12 (DI), N25, 33–35 (GVD), and 122–126 (STGAY) each bind substrate. D35 acts as the Proton acceptor in catalysis.

It belongs to the MacroD-type family. YmdB subfamily. As to quaternary structure, homodimer. Interacts with RNase III.

It catalyses the reaction 3''-O-acetyl-ADP-D-ribose + H2O = ADP-D-ribose + acetate + H(+). The catalysed reaction is 2''-O-acetyl-ADP-D-ribose + H2O = ADP-D-ribose + acetate + H(+). Deacetylates O-acetyl-ADP ribose to yield ADP-ribose and free acetate. Down-regulates ribonuclease 3 (RNase III) activity. Acts by interacting directly with the region of the ribonuclease that is required for dimerization/activation. In Citrobacter koseri (strain ATCC BAA-895 / CDC 4225-83 / SGSC4696), this protein is O-acetyl-ADP-ribose deacetylase.